The sequence spans 248 residues: tRNA1(Val) (adenine(37)-N6)-methyltransferase (248 aa).

The protein belongs to the methyltransferase superfamily. tRNA (adenine-N(6)-)-methyltransferase family.

The protein resides in the cytoplasm. The enzyme catalyses adenosine(37) in tRNA1(Val) + S-adenosyl-L-methionine = N(6)-methyladenosine(37) in tRNA1(Val) + S-adenosyl-L-homocysteine + H(+). Functionally, specifically methylates the adenine in position 37 of tRNA(1)(Val) (anticodon cmo5UAC). In Pectobacterium carotovorum subsp. carotovorum (strain PC1), this protein is tRNA1(Val) (adenine(37)-N6)-methyltransferase.